Here is a 692-residue protein sequence, read N- to C-terminus: Small conductance calcium-activated potassium channel-like protein 3 (692 aa).

Residues 270–290 (SLYLALFGVILMLVESEITAE) traverse the membrane as a helical segment. The helical transmembrane segment at 313–333 (TIALLYHIILYHLNDIVLELV) threads the bilayer. Residues 349-369 (VIQFCIEFICCGICPLPGSGE) form a helical membrane-spanning segment. A helical transmembrane segment spans residues 401–421 (VILSCFMLCRSYLFARFMVLH). A helical transmembrane segment spans residues 455 to 475 (PVLFLTTFTFIFWIIMSWMFV). The pore-forming intramembrane region spans 492 to 512 (YSNSLWFIAITFMLNGYGDIV). A helical transmembrane segment spans residues 520-540 (FIAIFVGVVGAVISSILIAVI). Positions 667-683 (HSTPNVPHLQGLTSSPV) are enriched in polar residues. Residues 667-692 (HSTPNVPHLQGLTSSPVPSDRYDNRF) are disordered.

The protein belongs to the potassium channel KCNN family. SK subfamily. As to quaternary structure, heterooligomer.

Its subcellular location is the membrane. Its function is as follows. Forms a voltage-independent potassium channel activated by intracellular calcium. This Caenorhabditis elegans protein is Small conductance calcium-activated potassium channel-like protein 3 (kcnl-3).